Consider the following 181-residue polypeptide: Coatomer subunit zeta-3 (181 aa).

This sequence belongs to the adaptor complexes small subunit family. Oligomeric complex that consists of at least the alpha, beta, beta', gamma, delta, epsilon and zeta subunits.

It localises to the cytoplasm. Its subcellular location is the golgi apparatus membrane. The protein localises to the cytoplasmic vesicle. It is found in the COPI-coated vesicle membrane. Functionally, the coatomer is a cytosolic protein complex that binds to dilysine motifs and reversibly associates with Golgi non-clathrin-coated vesicles, which further mediate biosynthetic protein transport from the ER, via the Golgi up to the trans Golgi network. Coatomer complex is required for budding from Golgi membranes, and is essential for the retrograde Golgi-to-ER transport of dilysine-tagged proteins. The zeta subunit may be involved in regulating the coat assembly and, hence, the rate of biosynthetic protein transport due to its association-dissociation properties with the coatomer complex. The polypeptide is Coatomer subunit zeta-3 (Arabidopsis thaliana (Mouse-ear cress)).